A 532-amino-acid polypeptide reads, in one-letter code: Probable cyclic di-GMP phosphodiesterase PdeD (532 aa).

The next 2 membrane-spanning stretches (helical) occupy residues 16–36 (MIVCTICALVTLASTLSVRFI) and 245–265 (LPLAVLLSLLVGYIAWLATAY). An EAL domain is found at 266–515 (RMSFSREINL…DFPKWLAGSQ (250 aa)).

The protein resides in the cell membrane. The catalysed reaction is 3',3'-c-di-GMP + H2O = 5'-phosphoguanylyl(3'-&gt;5')guanosine + H(+). Its function is as follows. Phosphodiesterase (PDE) that catalyzes the hydrolysis of cyclic-di-GMP (c-di-GMP) to 5'-pGpG. May serve as a negative regulator of cellulose synthesis (as has been suggested for S.typhimurium); overexpression inhibits cell aggregation in strains able to produce adhesive curli fimbriae. Cyclic-di-GMP is a second messenger which controls cell surface-associated traits in bacteria. The chain is Probable cyclic di-GMP phosphodiesterase PdeD from Escherichia coli (strain K12).